The sequence spans 198 residues: 7-methyl-GTP pyrophosphatase (198 aa).

The active-site Proton acceptor is the aspartate 69.

This sequence belongs to the Maf family. YceF subfamily. The cofactor is a divalent metal cation.

It is found in the cytoplasm. It catalyses the reaction N(7)-methyl-GTP + H2O = N(7)-methyl-GMP + diphosphate + H(+). Nucleoside triphosphate pyrophosphatase that hydrolyzes 7-methyl-GTP (m(7)GTP). May have a dual role in cell division arrest and in preventing the incorporation of modified nucleotides into cellular nucleic acids. The polypeptide is 7-methyl-GTP pyrophosphatase (Yersinia pestis bv. Antiqua (strain Antiqua)).